The primary structure comprises 1040 residues: Multidrug resistance protein MdtB (1040 aa).

12 helical membrane passes run 16–36, 347–367, 369–389, 396–416, 440–460, 472–492, 537–557, 863–883, 888–908, 911–931, 968–988, and 998–1018; these read FIMR…AGII, LMMA…NIPA, IIPG…MVFL, LTLM…IVVI, IGFT…PLLF, FAIT…TLTP, WLTL…WVFI, LGST…VLGI, FIHP…ALLA, IAGS…IGIV, ILMT…STGV, and IGMV…TPVI.

The protein belongs to the resistance-nodulation-cell division (RND) (TC 2.A.6) family. MdtB subfamily. Part of a tripartite efflux system composed of MdtA, MdtB and MdtC. MdtB forms a heteromultimer with MdtC.

Its subcellular location is the cell inner membrane. In terms of biological role, the MdtABC tripartite complex confers resistance against novobiocin and deoxycholate. The protein is Multidrug resistance protein MdtB of Escherichia coli O8 (strain IAI1).